The primary structure comprises 155 residues: Deoxyuridine 5'-triphosphate nucleotidohydrolase (155 aa).

Residues 74–76, N87, and 91–93 each bind substrate; these read RSG and LID.

The protein belongs to the dUTPase family. The cofactor is Mg(2+).

It carries out the reaction dUTP + H2O = dUMP + diphosphate + H(+). Its pathway is pyrimidine metabolism; dUMP biosynthesis; dUMP from dCTP (dUTP route): step 2/2. This enzyme is involved in nucleotide metabolism: it produces dUMP, the immediate precursor of thymidine nucleotides and it decreases the intracellular concentration of dUTP so that uracil cannot be incorporated into DNA. In Xanthomonas oryzae pv. oryzae (strain MAFF 311018), this protein is Deoxyuridine 5'-triphosphate nucleotidohydrolase.